The sequence spans 153 residues: Transcriptional repressor NrdR (153 aa).

The segment at 3–34 is a zinc-finger region; sequence CPSCFHNGTRVLDSRPVDEGRSIRRRRECESC. The ATP-cone domain maps to 49 to 139; sequence LIVVKKEGTR…VYRQFKDLNV (91 aa).

This sequence belongs to the NrdR family. The cofactor is Zn(2+).

Its function is as follows. Negatively regulates transcription of bacterial ribonucleotide reductase nrd genes and operons by binding to NrdR-boxes. In Bacillus mycoides (strain KBAB4) (Bacillus weihenstephanensis), this protein is Transcriptional repressor NrdR.